The primary structure comprises 630 residues: Transcription factor MYC1 (630 aa).

Disordered regions lie at residues 356-398 (FGDS…NNEE) and 430-463 (VKEA…EAER). Positions 440–449 (KPRKRGRKPA) are enriched in basic residues. Positions 450–463 (NGREEPLNHVEAER) are enriched in basic and acidic residues. The tract at residues 453-466 (EEPLNHVEAERQRR) is basic motif; degenerate. The 50-residue stretch at 453–502 (EEPLNHVEAERQRREKLNQRFYALRAVVPNVSKMDKASLLGDAIAYINEL) folds into the bHLH domain. A helix-loop-helix motif region spans residues 467–502 (EKLNQRFYALRAVVPNVSKMDKASLLGDAIAYINEL).

In terms of tissue distribution, highly expressed in trichomes and at lower levels in leaves and flowers. Expressed at low levels in roots, stems, leaves, flowers and fruits.

The protein resides in the nucleus. Its function is as follows. Transcriptional activator that binds to the G-box motif (5'-AACGTG-3') found in a number of promoters of jasmonate-induced genes. Transcription activator involved in the transcriptional regulation of terpene biosynthesis in glandular trichomes. Binds to the promoter of the linalool synthase TPS5 and promotes TPS5 gene transactivation. Acts synergistically with EOT1 in the transactivation of TPS5. Involved in type VI glandular trichome development. Involved in the activation of terpene synthases required for volatile mono- and sesquiterpenes synthesis by the glandular cells of type VI trichomes. The polypeptide is Transcription factor MYC1 (Solanum lycopersicum (Tomato)).